Reading from the N-terminus, the 671-residue chain is Annexin A6 (671 aa).

Annexin repeat units lie at residues 18–89 (FNAS…SLMR), 90–161 (PPAY…VLLQ), 173–245 (DLVE…AVVK), 249–320 (STAE…KLCE), 361–432 (FNDD…GLML), 433–504 (TPAQ…SLAL), 519–594 (EDAK…AIVR), and 598–669 (NKPA…LCGG).

The protein belongs to the annexin family.

The protein resides in the cytoplasm. Its subcellular location is the melanosome. May associate with CD21. May regulate the release of Ca(2+) from intracellular stores. The chain is Annexin A6 (ANXA6) from Gallus gallus (Chicken).